Reading from the N-terminus, the 236-residue chain is ATP synthase subunit a (236 aa).

Transmembrane regions (helical) follow at residues leucine 17–alanine 37, methionine 80–isoleucine 100, valine 114–leucine 134, isoleucine 179–isoleucine 199, and phenylalanine 208–methionine 228.

This sequence belongs to the ATPase A chain family. In terms of assembly, F-type ATPases have 2 components, CF(1) - the catalytic core - and CF(0) - the membrane proton channel. CF(1) has five subunits: alpha(3), beta(3), gamma(1), delta(1), epsilon(1). CF(0) has three main subunits: a(1), b(2) and c(9-12). The alpha and beta chains form an alternating ring which encloses part of the gamma chain. CF(1) is attached to CF(0) by a central stalk formed by the gamma and epsilon chains, while a peripheral stalk is formed by the delta and b chains.

The protein resides in the cell membrane. Key component of the proton channel; it plays a direct role in the translocation of protons across the membrane. This chain is ATP synthase subunit a, found in Anoxybacillus flavithermus (strain DSM 21510 / WK1).